Reading from the N-terminus, the 56-residue chain is Large ribosomal subunit protein bL33 (56 aa).

Belongs to the bacterial ribosomal protein bL33 family.

This is Large ribosomal subunit protein bL33 (rpmG) from Rickettsia prowazekii (strain Madrid E).